Here is a 157-residue protein sequence, read N- to C-terminus: Large ribosomal subunit protein mL59 (157 aa).

It belongs to the mitochondrion-specific ribosomal protein mL59 family. Component of the mitochondrial large ribosomal subunit (mt-LSU). Mature yeast 74S mitochondrial ribosomes consist of a small (37S) and a large (54S) subunit. The 37S small subunit contains a 15S ribosomal RNA (15S mt-rRNA) and 34 different proteins. The 54S large subunit contains a 21S rRNA (21S mt-rRNA) and 46 different proteins.

It is found in the mitochondrion. Its function is as follows. Component of the mitochondrial ribosome (mitoribosome), a dedicated translation machinery responsible for the synthesis of mitochondrial genome-encoded proteins, including at least some of the essential transmembrane subunits of the mitochondrial respiratory chain. The mitoribosomes are attached to the mitochondrial inner membrane and translation products are cotranslationally integrated into the membrane. The polypeptide is Large ribosomal subunit protein mL59 (MRPL25) (Saccharomyces cerevisiae (strain ATCC 204508 / S288c) (Baker's yeast)).